A 752-amino-acid chain; its full sequence is GTPase-activating protein rrc-1 (752 aa).

Residues 165–244 (PAIAAAVVTK…PRDCVMLIDD (80 aa)) form the SH3 domain. The Rho-GAP domain maps to 281–463 (LELTELFMRT…FCIENSDSLF (183 aa)). Disordered stretches follow at residues 523-552 (STGE…ATFQ) and 582-609 (RSMR…GANN).

Functions as a GTPase-activating protein (GAP) for ced-10/RAC-1 and CDC42. The protein is GTPase-activating protein rrc-1 of Caenorhabditis briggsae.